Consider the following 288-residue polypeptide: Serine/threonine-protein acetyltransferase YopJ (288 aa).

Residues His109 and Glu128 contribute to the active site. His109 provides a ligand contact to CoA. 167–168 serves as a coordination point for CoA; that stretch reads RS. Cys172 is an active-site residue. Residues 182-185 and 224-225 each bind 1D-myo-inositol hexakisphosphate; these read KLYI and KH. Residue 227–230 participates in CoA binding; the sequence is QGKK. Arg257 lines the 1D-myo-inositol hexakisphosphate pocket. Position 266 to 270 (266 to 270) interacts with CoA; it reads DGKEL.

Belongs to the acetyltransferase YopJ family. Requires 1D-myo-inositol hexakisphosphate as cofactor.

It is found in the secreted. It catalyses the reaction L-threonyl-[protein] + acetyl-CoA = O-acetyl-L-threonyl-[protein] + CoA. The catalysed reaction is L-seryl-[protein] + acetyl-CoA = O-acetyl-L-seryl-[protein] + CoA. 1D-myo-inositol hexakisphosphate activates protein-acetyltransferase activity via an allosteric mechanism: 1D-myo-inositol hexakisphosphate-binding induces a conformational rearrangement that stimulates the interaction with acetyl-CoA. Functionally, serine/threonine-protein acetyltransferase translocated into infected cells, which inhibits the host immune response and induces cell death by mediating acetylation of target proteins. Inhibits the MAPK and NF-kappa-B signaling pathways by acetylating protein-kinases such as MAP2K1, MAP2K6, MAP3K7/TAK1 and I-kappa-B kinase (CHUK/IKKA and IKBKB) on serine and threonine residues critical for their activation by phosphorylation, thereby preventing protein-kinase activation. Promotes pyroptosis, a programmed cell death, in host cells by mediating acetylation of MAP3K7/TAK1: MAP3K7/TAK1 inactivation triggers activation of caspase-8 (CASP8), followed by CASP8-dependent cleavage of gasdermin-D (GSDMD) and induction of pyroptosis. In Yersinia pestis, this protein is Serine/threonine-protein acetyltransferase YopJ.